Here is a 520-residue protein sequence, read N- to C-terminus: Dihydropyrimidinase 2 (520 aa).

Residues H59, H61, and K152 each coordinate Zn(2+). Residue K152 is modified to N6-carboxylysine. Y157 serves as a coordination point for substrate. H185 and H241 together coordinate Zn(2+). S291 contributes to the substrate binding site. Residue D319 coordinates Zn(2+). Position 340 (N340) interacts with substrate.

Belongs to the metallo-dependent hydrolases superfamily. Hydantoinase/dihydropyrimidinase family. As to quaternary structure, homotetramer. It depends on Zn(2+) as a cofactor. Carboxylation allows a single lysine to coordinate two zinc ions. In terms of tissue distribution, body wall muscles.

The catalysed reaction is 5,6-dihydrouracil + H2O = 3-(carbamoylamino)propanoate + H(+). This Caenorhabditis elegans protein is Dihydropyrimidinase 2 (dhp-2).